Reading from the N-terminus, the 719-residue chain is Pesticidal crystal protein Cry1Id (719 aa).

The protein belongs to the delta endotoxin family.

Its function is as follows. Promotes colloidosmotic lysis by binding to the midgut epithelial cells of many lepidopteran larvae. Active on Plutella xylostella and on Bombyx mori. In Bacillus thuringiensis, this protein is Pesticidal crystal protein Cry1Id (cry1Id).